Consider the following 478-residue polypeptide: Flotillin-like protein 1 (478 aa).

Cysteine 35 is lipidated: S-palmitoyl cysteine. Positions 235 to 277 (ENQREAEVAEANSELAKKKAAWTMAAQVAELEAAKAVALREAE) form a coiled coil.

The protein belongs to the band 7/mec-2 family. Flotillin subfamily. In terms of processing, may be palmitoylated. Expressed in all plant organs. Primarily expressed in vascular tissues. No change in spatial expression in root upon inoculation. Expression limited to the nodule vascular tissue.

The protein localises to the cell membrane. Its subcellular location is the membrane. It localises to the caveola. May act as a scaffolding protein within caveolar membranes, functionally participating in formation of caveolae or caveolae-like vesicles. May be involved in nodule formation. This is Flotillin-like protein 1 (FLOT1) from Medicago truncatula (Barrel medic).